A 2065-amino-acid polypeptide reads, in one-letter code: WD repeat-containing protein 81 (2065 aa).

The region spanning 325-617 is the BEACH domain; the sequence is LCRNCQDELK…EPPHFGRVNV (293 aa). Disordered regions lie at residues 1082–1111, 1156–1230, 1271–1290, and 1595–1642; these read EEEE…GGSG, TTVG…VEDR, GEKN…DSEE, and ASPG…GGDI. The span at 1101 to 1111 shows a compositional bias: gly residues; that stretch reads KVGGGSGGGSG. Positions 1156–1169 are enriched in polar residues; that stretch reads TTVGTKQQNQSTAN. Residues 1213–1228 are compositionally biased toward acidic residues; sequence DGEDGGELEDEEETVE. Positions 1624–1637 are enriched in low complexity; that stretch reads SRSPFPAPSSTSTP. WD repeat units follow at residues 1767-1806, 1813-1853, 1906-1945, 1948-1986, and 2035-2065; these read GHSG…DGTR, TYTE…NIRC, LSAG…VLRG, GHEG…PLHQ, and NFRG…RLLA.

The protein belongs to the WD repeat WDR81 family. In terms of tissue distribution, widely expressed.

The protein resides in the early endosome membrane. Its subcellular location is the late endosome membrane. It localises to the lysosome membrane. It is found in the cytoplasmic vesicle. The protein localises to the autophagosome membrane. The protein resides in the mitochondrion. Its subcellular location is the cytoplasm. It localises to the cytosol. In terms of biological role, functions as a negative regulator of the PI3 kinase/PI3K activity associated with endosomal membranes. By modifying the phosphatidylinositol 3-phosphate/PtdInsP3 content of endosomal membranes may regulate endosome fusion, recycling, sorting and early to late endosome transport. May also play a role in aggrephagy, the macroautophagic degradation of ubiquitinated protein aggregates. May also be involved in maintenance of normal mitochondrial structure and organization. In Danio rerio (Zebrafish), this protein is WD repeat-containing protein 81 (wdr81).